The following is a 140-amino-acid chain: Ctenidin-1 (140 aa).

Residues 1 to 19 (MKHLIPLIVMASVVLAVYA) form the signal peptide. Position 138 is a glycine amide (Gly-138).

The protein belongs to the glycine-rich peptide family. Expressed in hemocytes (at protein level).

The protein resides in the secreted. Functionally, antimicrobial protein with bacteriostatic activity against the Gram-negative bacterium E.coli, and very weak activity against the Gram-positive bacterium S.aureus. Lacks activity against the yeast C.albicans. The chain is Ctenidin-1 from Cupiennius salei (American wandering spider).